The chain runs to 495 residues: B3 domain-containing protein Os01g0234100 (495 aa).

Disordered stretches follow at residues 1–25 (MAID…KMEQ) and 88–108 (PGIP…NTTE). Over residues 92 to 108 (QTCNTQNTSNGRTNTTE) the composition is skewed to polar residues. The TF-B3 DNA-binding region spans 152-243 (FVKHMLHSHV…KFKVHIIRDK (92 aa)). Basic and acidic residues predominate over residues 268–282 (EATDNATKPKEDPET). The disordered stretch occupies residues 268 to 289 (EATDNATKPKEDPETTRVSSKV).

It localises to the nucleus. This chain is B3 domain-containing protein Os01g0234100, found in Oryza sativa subsp. japonica (Rice).